A 184-amino-acid chain; its full sequence is Large ribosomal subunit protein uL5c (184 aa).

The protein belongs to the universal ribosomal protein uL5 family. Part of the 50S ribosomal subunit; contacts the 5S rRNA.

The protein resides in the plastid. It is found in the chloroplast. Functionally, binds 5S rRNA, forms part of the central protuberance of the 50S subunit. The chain is Large ribosomal subunit protein uL5c (rpl5) from Nephroselmis olivacea (Green alga).